Reading from the N-terminus, the 617-residue chain is V-type proton ATPase catalytic subunit A (617 aa).

Thr-136 is subject to Phosphothreonine. 250-257 (GAFGCGKT) lines the ATP pocket. Position 384 is a phosphoserine; by AMPK (Ser-384).

The protein belongs to the ATPase alpha/beta chains family. V-ATPase is a heteromultimeric enzyme made up of two complexes: the ATP-hydrolytic V1 complex and the proton translocation V0 complex. The V1 complex consists of three catalytic AB heterodimers that form a heterohexamer, three peripheral stalks each consisting of EG heterodimers, one central rotor including subunits D and F, and the regulatory subunits C and H. The proton translocation complex V0 consists of the proton transport subunit a, a ring of proteolipid subunits c9c'', rotary subunit d, subunits e and f, and the accessory subunits ATP6AP1/Ac45 and ATP6AP2/PRR. Interacts with the V0 complex V-ATPase subunit a4 ATP6V0A4. Interacts with WFS1. Interacts with alpha-crystallin B chain/CRYAB and with MTOR, forming a ternary complex. In terms of processing, phosphorylation at Ser-384 by AMPK down-regulates its enzyme activity. As to expression, expressed in brain (at protein level).

The protein localises to the cytoplasm. Its subcellular location is the cytosol. It is found in the cytoplasmic vesicle. It localises to the secretory vesicle. The protein resides in the clathrin-coated vesicle membrane. The protein localises to the lysosome. It catalyses the reaction ATP + H2O + 4 H(+)(in) = ADP + phosphate + 5 H(+)(out). Its activity is regulated as follows. ATP hydrolysis occurs at the interface between the nucleotide-binding domains of subunits A and B. ATP hydrolysis triggers a conformational change in the subunits D and F, which induces a shift of subunit d. The c-ring is subsequently rotated and results in a continuous proton translocation across the membrane. The V-ATPase is inhibited by bafilomycin A. Catalytic subunit of the V1 complex of vacuolar(H+)-ATPase (V-ATPase), a multisubunit enzyme composed of a peripheral complex (V1) that hydrolyzes ATP and a membrane integral complex (V0) that translocates protons. V-ATPase is responsible for acidifying and maintaining the pH of intracellular compartments and in some cell types, is targeted to the plasma membrane, where it is responsible for acidifying the extracellular environment. In aerobic conditions, involved in intracellular iron homeostasis, thus triggering the activity of Fe(2+) prolyl hydroxylase (PHD) enzymes, and leading to HIF1A hydroxylation and subsequent proteasomal degradation. May play a role in neurite development and synaptic connectivity. This chain is V-type proton ATPase catalytic subunit A (ATP6V1A), found in Bos taurus (Bovine).